We begin with the raw amino-acid sequence, 455 residues long: EP1-like glycoprotein 2 (455 aa).

The signal sequence occupies residues 1–22 (MSRFAILVTLALAIATVSVVIA). Residues 44–163 (EYDASYRFIE…NGKFVWQSFD (120 aa)) form the Bulb-type lectin domain. Asparagine 56, asparagine 106, asparagine 191, asparagine 211, asparagine 241, and asparagine 289 each carry an N-linked (GlcNAc...) asparagine glycan. Cysteine 374 is subject to S-nitrosocysteine. In terms of domain architecture, PAN spans 374 to 455 (CSGVKGKTVN…NTSSVAYIKY (82 aa)). Disulfide bonds link cysteine 410/cysteine 432 and cysteine 414/cysteine 420. Asparagine 446 carries N-linked (GlcNAc...) asparagine glycosylation.

The protein resides in the secreted. It localises to the cell wall. The sequence is that of EP1-like glycoprotein 2 from Arabidopsis thaliana (Mouse-ear cress).